The sequence spans 1321 residues: C-Jun-amino-terminal kinase-interacting protein 4 (1321 aa).

Residue methionine 1 is modified to N-acetylmethionine. The 89-residue stretch at 7 to 95 (VVYQEEPGGS…ITQYEREKAL (89 aa)) folds into the RH1 domain. The stretch at 66–166 (AQDQEHQVEL…NALHQRHTEM (101 aa)) forms a coiled coil. Phosphoserine is present on residues serine 109, serine 183, serine 185, serine 194, and serine 203. The disordered stretch occupies residues 203-292 (SLGIFPLPAG…SDVATIPTDT (90 aa)). Threonine 217 bears the Phosphothreonine mark. Positions 236-253 (ELSQPRSHTSLKVSNSPE) are enriched in polar residues. Serine 238, serine 251, serine 265, serine 268, and serine 272 each carry phosphoserine. The span at 266–285 (DVSQGGSKATTPASTANSDV) shows a compositional bias: polar residues. Threonine 292 bears the Phosphothreonine mark. Phosphoserine is present on residues serine 311, serine 329, serine 332, and serine 347. A phosphothreonine mark is found at threonine 348, threonine 365, and threonine 418. A coiled-coil region spans residues 408 to 534 (REVENLILEN…LQEAVRWTEM (127 aa)). The span at 473 to 489 (LRKARAEAEDARQKAKD) shows a compositional bias: basic and acidic residues. Disordered stretches follow at residues 473 to 500 (LRKA…TAQR) and 563 to 600 (SSNT…SQLP). The region spanning 500–571 (RKRFTRVEMA…SSSNTTKKPE (72 aa)) is the RH2 domain. Threonine 586 carries the phosphothreonine modification. Serine 588 carries the post-translational modification Phosphoserine. Threonine 595 is modified (phosphothreonine). A phosphoserine mark is found at serine 705, serine 728, serine 730, serine 732, and serine 733. Residues 724–758 (SKQRSASQSSLDKLDQELKEQQKELKNQEELSSLV) adopt a coiled-coil conformation. The segment at 854–906 (GAATSPSTNGASPVMDKPPEMEAENSEVDENVPTAEEATEATEGNAGSAEDTV) is disordered. The segment covering 855–864 (AATSPSTNGA) has biased composition (polar residues). Acidic residues predominate over residues 874 to 883 (MEAENSEVDE). Over residues 894–903 (ATEGNAGSAE) the composition is skewed to low complexity. Serine 1188 is modified (phosphoserine). Residues 1239 to 1266 (PQSSSSGTDLTGDKAGPSAQEPGSQTPL) form a disordered region. Residue threonine 1264 is modified to Phosphothreonine.

This sequence belongs to the JIP scaffold family. Homodimer. The homodimer interacts with ARF6, forming a heterotetramer. Homooligomer. Interacts with MAX, MAPK14, MAP3K3, MYC, KNS2 and MAP2K4. Interaction with KNS2 is important in the formation of ternary complex with MAPK8. Interacts with NFKB1. Interacts with PIP4P1. Interacts with PIKFYVE. As to quaternary structure, interacts with MAPK8, MAPK9, MAPK10. In terms of processing, phosphorylated by MAPK8 and MAPK14. In terms of tissue distribution, expressed only in testis on the round spermatids of stage I, II and II. Absent in spermatogonia and spermatocyte. Expressed in testis and in acute myeloid leukemia (AML) patients. As to expression, expressed in testis.

Its subcellular location is the cytoplasm. The protein resides in the perinuclear region. The protein localises to the lysosome membrane. It localises to the cytoplasmic vesicle. It is found in the secretory vesicle. Its subcellular location is the acrosome. With respect to regulation, may play a role in spermatozoa-egg-interaction. Its function is as follows. The JNK-interacting protein (JIP) group of scaffold proteins selectively mediates JNK signaling by aggregating specific components of the MAPK cascade to form a functional JNK signaling module. Regulates lysosomal positioning by acting as an adapter protein which links PIP4P1-positive lysosomes to the dynein-dynactin complex. Assists PIKFYVE selective functionality in microtubule-based endosome-to-TGN trafficking. This chain is C-Jun-amino-terminal kinase-interacting protein 4, found in Homo sapiens (Human).